A 579-amino-acid chain; its full sequence is 6-deoxy-6-sulfo-D-gluconate dehydratase (579 aa).

[4Fe-4S] cluster is bound by residues C59, C127, and C200.

The protein belongs to the IlvD/Edd family. In terms of assembly, homodimer. [4Fe-4S] cluster serves as cofactor.

The enzyme catalyses 6-deoxy-6-sulfo-D-gluconate = 2-dehydro-3,6-dideoxy-6-sulfo-D-gluconate + H2O. Catalyzes the dehydration of 6-deoxy-6-sulfo-D-gluconate to 2-dehydro-3,6-dideoxy-6-sulfo-D-gluconate. Is involved in a degradation pathway of sulfoquinovose (SQ) that allows P.putida SQ1 to use SQ as the sole carbon and energy source for growth. This Pseudomonas putida (Arthrobacter siderocapsulatus) protein is 6-deoxy-6-sulfo-D-gluconate dehydratase.